Consider the following 220-residue polypeptide: U1 small nuclear ribonucleoprotein C (220 aa).

The segment at 4 to 36 adopts a Matrin-type zinc-finger fold; sequence YYCDYCDIYLTHDSMNARKAHNSGRNHVANVRD. 2 stretches are compositionally biased toward pro residues: residues 88 to 130 and 147 to 165; these read PGPP…PFLP and PPFP…PFRP. The segment at 88 to 220 is disordered; sequence PGPPPPGAFP…HPDRLRMLGQ (133 aa). The span at 166–200 shows a compositional bias: low complexity; the sequence is PMGMGMPPAPAQAQAQGSPMGMPQQGQQGTFTPTQ. Residues 211-220 are compositionally biased toward basic and acidic residues; it reads HPDRLRMLGQ.

This sequence belongs to the U1 small nuclear ribonucleoprotein C family. As to quaternary structure, U1 snRNP is composed of the 7 core Sm proteins B/B', D1, D2, D3, E, F and G that assemble in a heptameric protein ring on the Sm site of the small nuclear RNA to form the core snRNP, and at least 3 U1 snRNP-specific proteins U1-70K, U1-A and U1-C. U1-C interacts with U1 snRNA and the 5' splice-site region of the pre-mRNA.

The protein localises to the nucleus. Its function is as follows. Component of the spliceosomal U1 snRNP, which is essential for recognition of the pre-mRNA 5' splice-site and the subsequent assembly of the spliceosome. U1-C is directly involved in initial 5' splice-site recognition for both constitutive and regulated alternative splicing. The interaction with the 5' splice-site seems to precede base-pairing between the pre-mRNA and the U1 snRNA. Stimulates commitment or early (E) complex formation by stabilizing the base pairing of the 5' end of the U1 snRNA and the 5' splice-site region. This chain is U1 small nuclear ribonucleoprotein C, found in Cryptococcus neoformans var. neoformans serotype D (strain JEC21 / ATCC MYA-565) (Filobasidiella neoformans).